A 450-amino-acid chain; its full sequence is Ribulose bisphosphate carboxylase large chain (450 aa).

Lys-4 carries the N6,N6,N6-trimethyllysine modification. Substrate-binding residues include Asn-113 and Thr-163. Catalysis depends on Lys-165, which acts as the Proton acceptor. Residue Lys-167 coordinates substrate. 3 residues coordinate Mg(2+): Lys-191, Asp-193, and Glu-194. Lys-191 carries the N6-carboxylysine modification. His-284 (proton acceptor) is an active-site residue. 3 residues coordinate substrate: Arg-285, His-317, and Ser-369.

It belongs to the RuBisCO large chain family. Type I subfamily. Heterohexadecamer of 8 large chains and 8 small chains; disulfide-linked. The disulfide link is formed within the large subunit homodimers. Requires Mg(2+) as cofactor. In terms of processing, the disulfide bond which can form in the large chain dimeric partners within the hexadecamer appears to be associated with oxidative stress and protein turnover.

It is found in the plastid. It localises to the chloroplast. The enzyme catalyses 2 (2R)-3-phosphoglycerate + 2 H(+) = D-ribulose 1,5-bisphosphate + CO2 + H2O. It carries out the reaction D-ribulose 1,5-bisphosphate + O2 = 2-phosphoglycolate + (2R)-3-phosphoglycerate + 2 H(+). Its function is as follows. RuBisCO catalyzes two reactions: the carboxylation of D-ribulose 1,5-bisphosphate, the primary event in carbon dioxide fixation, as well as the oxidative fragmentation of the pentose substrate in the photorespiration process. Both reactions occur simultaneously and in competition at the same active site. This chain is Ribulose bisphosphate carboxylase large chain, found in Crassula rupestris subsp. marnieriana (Pygmyweed).